Here is a 1146-residue protein sequence, read N- to C-terminus: Transcription-repair-coupling factor (1146 aa).

A Helicase ATP-binding domain is found at 617–778; sequence DMCQPKAMDR…MNGIRDLSII (162 aa). 630-637 is a binding site for ATP; sequence GDVGFGKT. Residues 731–734 carry the DEEH box motif; it reads DEEH. The Helicase C-terminal domain occupies 800–953; sequence VREAILREIL…GFILATHDLE (154 aa).

The protein in the N-terminal section; belongs to the UvrB family. This sequence in the C-terminal section; belongs to the helicase family. RecG subfamily.

The protein resides in the cytoplasm. Functionally, couples transcription and DNA repair by recognizing RNA polymerase (RNAP) stalled at DNA lesions. Mediates ATP-dependent release of RNAP and its truncated transcript from the DNA, and recruitment of nucleotide excision repair machinery to the damaged site. The sequence is that of Transcription-repair-coupling factor from Haemophilus influenzae (strain ATCC 51907 / DSM 11121 / KW20 / Rd).